A 216-amino-acid chain; its full sequence is Kynurenine formamidase (216 aa).

Substrate is bound at residue Trp-25. Residues His-55, His-59, and Asp-61 each contribute to the Zn(2+) site. His-65 functions as the Proton donor/acceptor in the catalytic mechanism. Residues His-167 and Glu-179 each contribute to the Zn(2+) site.

Belongs to the Cyclase 1 superfamily. KynB family. Homodimer. The cofactor is Zn(2+).

The enzyme catalyses N-formyl-L-kynurenine + H2O = L-kynurenine + formate + H(+). It functions in the pathway amino-acid degradation; L-tryptophan degradation via kynurenine pathway; L-kynurenine from L-tryptophan: step 2/2. Its function is as follows. Catalyzes the hydrolysis of N-formyl-L-kynurenine to L-kynurenine, the second step in the kynurenine pathway of tryptophan degradation. The polypeptide is Kynurenine formamidase (Cupriavidus taiwanensis (strain DSM 17343 / BCRC 17206 / CCUG 44338 / CIP 107171 / LMG 19424 / R1) (Ralstonia taiwanensis (strain LMG 19424))).